Consider the following 183-residue polypeptide: Nucleosome assembly protein 1-like 5 (183 aa).

A disordered region spans residues 1–71 (MADSENQGPA…APKPKNDFIE (71 aa)). Low complexity-rich tracts occupy residues 7–21 (QGPA…AAEA) and 28–49 (AEGG…SAAG). Positions 81–107 (VLALKKLQKRCDKIEAKFDKEFQALEK) form a coiled coil. Positions 135-161 (EGEEEEEEEYEDDEEEGEEEEEEEEAA) are enriched in acidic residues. The interval 135-183 (EGEEEEEEEYEDDEEEGEEEEEEEEAAAEAAAGAKHDDAHAEMPDDAKK) is disordered. The span at 168-183 (AKHDDAHAEMPDDAKK) shows a compositional bias: basic and acidic residues.

Belongs to the nucleosome assembly protein (NAP) family.

Its subcellular location is the nucleus. This chain is Nucleosome assembly protein 1-like 5 (NAP1L5), found in Pongo abelii (Sumatran orangutan).